Here is a 75-residue protein sequence, read N- to C-terminus: Tautomerase PptA (75 aa).

P2 functions as the Proton acceptor; via imino nitrogen in the catalytic mechanism.

This sequence belongs to the 4-oxalocrotonate tautomerase family. PptA subfamily. As to quaternary structure, homodimer.

The protein localises to the cytoplasm. The polypeptide is Tautomerase PptA (Shigella sonnei (strain Ss046)).